The chain runs to 512 residues: Endo-1,4-beta-xylanase A (512 aa).

Positions 1 to 30 are cleaved as a signal peptide; it reads MKRKVKKMAAMATSIIMAIMIILHSIPVLA. Residues 33 to 228 form the GH11 domain; the sequence is IIYDNETGTH…SSGYANVYKN (196 aa). Residue Glu-124 is the Nucleophile of the active site. Glu-215 acts as the Proton donor in catalysis. CBM6 domains lie at 251 to 371 and 388 to 508; these read SIIE…FIFS and SIIQ…FVFS. Residues Glu-254 and Glu-256 each contribute to the Ca(2+) site. Thr-271 is a D-xylotriose binding site. Arg-276 provides a ligand contact to Ca(2+). Repeat unit 1 spans residues 279–340; sequence GYIENGNTVT…SSTGSWNTYQ (62 aa). The tract at residues 279 to 477 is 2 X 61 AA approximate repeats; the sequence is GYIENGNTVT…GSTGSFDTYR (199 aa). 3 residues coordinate D-xylotriose: Tyr-280, Asn-337, and Asn-364. Positions 280, 337, and 364 each coordinate D-xylobiose. 4 residues coordinate Ca(2+): Asp-366, Gln-391, Glu-393, and Ser-413. Repeat 2 spans residues 416-477; the sequence is GYIENGYSTT…GSTGSFDTYR (62 aa). Positions 417, 474, and 501 each coordinate D-xylotriose. Asp-503 provides a ligand contact to Ca(2+).

Belongs to the glycosyl hydrolase 11 (cellulase G) family.

It carries out the reaction Endohydrolysis of (1-&gt;4)-beta-D-xylosidic linkages in xylans.. It functions in the pathway glycan degradation; xylan degradation. This is Endo-1,4-beta-xylanase A (xynA) from Thermoclostridium stercorarium (Clostridium stercorarium).